The sequence spans 224 residues: N6-methyladenosine RNA demethylase ALKBH (224 aa).

Residues 93-222 enclose the Fe2OG dioxygenase domain; it reads LAQAAIVNFY…RINLNVRQMR (130 aa). Fe cation is bound by residues His-111, Asp-113, and His-178. Arg-213 contributes to the 2-oxoglutarate binding site.

Belongs to the alkB family. Requires Fe(2+) as cofactor.

The catalysed reaction is an N(6)-methyladenosine in mRNA + 2-oxoglutarate + O2 = an adenosine in mRNA + formaldehyde + succinate + CO2. In terms of biological role, RNA demethylase that regulates the stability of mRNAs through an m(6)A-dependent manner. M6A is a modification present at internal sites of mRNAs and some non-coding RNAs and plays a role in mRNA stability and processing. Demethylate m6A at position A1935 within the 3'UTR of transcription factor ZAP1 and plays an important role in C.parasitica development and virulence. Target mRNAs are primarily associated with amino-acid biosynthesis, 2-oxocarboxylic acid metabolism, and ABC transporters, as well as alpha-amino acid metabolism, small-molecule biosynthesis, and the sulfite reductase complex (NADPH). The protein is N6-methyladenosine RNA demethylase ALKBH of Cryphonectria parasitica (strain ATCC 38755 / EP155).